The chain runs to 321 residues: Probable protein phosphatase methylesterase 1 (321 aa).

Catalysis depends on residues Ser170, Asp195, and His307.

Belongs to the AB hydrolase superfamily.

It catalyses the reaction [phosphatase 2A protein]-C-terminal L-leucine methyl ester + H2O = [phosphatase 2A protein]-C-terminal L-leucine + methanol + H(+). Functionally, demethylates proteins that have been reversibly carboxymethylated. The chain is Probable protein phosphatase methylesterase 1 (ppme1) from Dictyostelium discoideum (Social amoeba).